We begin with the raw amino-acid sequence, 469 residues long: UDP-N-acetylmuramate--L-alanine ligase (469 aa).

113 to 119 (GTHGKTT) lines the ATP pocket.

The protein belongs to the MurCDEF family.

Its subcellular location is the cytoplasm. The enzyme catalyses UDP-N-acetyl-alpha-D-muramate + L-alanine + ATP = UDP-N-acetyl-alpha-D-muramoyl-L-alanine + ADP + phosphate + H(+). It functions in the pathway cell wall biogenesis; peptidoglycan biosynthesis. In terms of biological role, cell wall formation. This chain is UDP-N-acetylmuramate--L-alanine ligase, found in Neisseria meningitidis serogroup B (strain ATCC BAA-335 / MC58).